Consider the following 359-residue polypeptide: Alanine racemase, biosynthetic (359 aa).

The active-site Proton acceptor; specific for D-alanine is the K34. The residue at position 34 (K34) is an N6-(pyridoxal phosphate)lysine. R129 serves as a coordination point for substrate. Y255 serves as the catalytic Proton acceptor; specific for L-alanine. M303 contacts substrate.

It belongs to the alanine racemase family. The cofactor is pyridoxal 5'-phosphate.

The catalysed reaction is L-alanine = D-alanine. It participates in amino-acid biosynthesis; D-alanine biosynthesis; D-alanine from L-alanine: step 1/1. Its pathway is cell wall biogenesis; peptidoglycan biosynthesis. Functionally, catalyzes the interconversion of L-alanine and D-alanine. Provides the D-alanine required for cell wall biosynthesis. This chain is Alanine racemase, biosynthetic (alr), found in Salmonella typhi.